Here is a 348-residue protein sequence, read N- to C-terminus: Ephrin-4 (348 aa).

The signal sequence occupies residues 1–20 (MKQFFEFLITTFLLLGLAAA). In terms of domain architecture, Ephrin RBD spans 21–178 (DEHIVYWNST…SQNMRLSMKV (158 aa)). N-linked (GlcNAc...) asparagine glycosylation is present at asparagine 28. 2 cysteine pairs are disulfide-bonded: cysteine 53–cysteine 91 and cysteine 79–cysteine 167. The N-linked (GlcNAc...) asparagine glycan is linked to asparagine 157. Residues 207–237 (GGQEDEDSDNDNAHLLPRDLEGSTNPKFRRP) are disordered. Serine 329 is lipidated: GPI-anchor amidated serine. Residues 330 to 348 (STSLSTNFAILLAVIYVLY) constitute a propeptide, removed in mature form.

The protein belongs to the ephrin family. In terms of assembly, interacts with lat-2. Post-translationally, may undergo proteolysis by metalloprotease sup-17 to give rise to a soluble form.

Its subcellular location is the cell membrane. In terms of biological role, regulates the formation or stabilization of cell-cell contacts at several stages of epithelial morphogenesis. In early embryonic development, involved in ventral closure of the epidermis. During male tail morphogenesis, regulates precursor cell sorting together with mab-20 and allows the formation of distinct sensory rays. Probably acts as a ligand for lad-2 to regulate axon guidance of several neurons including SDQL, SDQR, SMD and PLN neurons during neurogenesis. The protein is Ephrin-4 (efn-4) of Caenorhabditis elegans.